The sequence spans 213 residues: High frequency lysogenization protein HflD homolog (213 aa).

A coiled-coil region spans residues 79–122 (QGLNAELTRYTLSLMVLERKLSSAKGALNTLGDRINGLQRQLDH).

The protein belongs to the HflD family.

It is found in the cytoplasm. Its subcellular location is the cell inner membrane. The protein is High frequency lysogenization protein HflD homolog of Salmonella agona (strain SL483).